A 407-amino-acid polypeptide reads, in one-letter code: uncharacterized protein (407 aa).

3 disordered regions span residues 1-64 (MSRK…EPFD), 110-276 (GFGP…YPQF), and 314-341 (QSRP…HNNP). Polar residues predominate over residues 7-32 (KQSNPKRNYKNDNYFQENSYTMTNGF). Over residues 33-44 (TKDKDGKPVEFK) the composition is skewed to basic and acidic residues. Over residues 122 to 137 (DSDSEYSDECLTDECS) the composition is skewed to acidic residues. 2 stretches are compositionally biased toward polar residues: residues 138–147 (DNYNKQSTDS) and 184–201 (NFDN…NSQP). Residues 209–231 (SKSSSKSSKSNKSNKSSKSNKSS) are compositionally biased toward low complexity. Over residues 232-246 (KSSKSKSNKHSKHKN) the composition is skewed to basic residues. Residues 247–258 (KSDSSSDSDEKT) show a composition bias toward basic and acidic residues. Composition is skewed to basic residues over residues 259 to 270 (HKHKDRRHRRGR) and 316 to 341 (RPRK…HNNP).

This is an uncharacterized protein from Acanthamoeba polyphaga mimivirus (APMV).